Here is a 347-residue protein sequence, read N- to C-terminus: Quinolinate synthase (347 aa).

Iminosuccinate is bound by residues His47 and Ser68. Residue Cys113 participates in [4Fe-4S] cluster binding. Iminosuccinate-binding positions include Tyr139–Asn141 and Ser156. Cys200 contacts [4Fe-4S] cluster. Iminosuccinate is bound by residues His226–Glu228 and Thr243. [4Fe-4S] cluster is bound at residue Cys297.

Belongs to the quinolinate synthase family. Type 1 subfamily. [4Fe-4S] cluster is required as a cofactor.

Its subcellular location is the cytoplasm. The enzyme catalyses iminosuccinate + dihydroxyacetone phosphate = quinolinate + phosphate + 2 H2O + H(+). It functions in the pathway cofactor biosynthesis; NAD(+) biosynthesis; quinolinate from iminoaspartate: step 1/1. Its function is as follows. Catalyzes the condensation of iminoaspartate with dihydroxyacetone phosphate to form quinolinate. The sequence is that of Quinolinate synthase from Escherichia coli O139:H28 (strain E24377A / ETEC).